Consider the following 1068-residue polypeptide: Phosphatidylinositol 4,5-bisphosphate 3-kinase catalytic subunit alpha isoform (1068 aa).

Residues 16–105 (MPPRILVECL…QPFLKVIEPV (90 aa)) enclose the PI3K-ABD domain. Residues 187-289 (KGQIIVVIWV…GRMPNLMLMA (103 aa)) enclose the PI3K-RBD domain. The region spanning 330 to 487 (INSALRIKIL…DWFSSVVKFP (158 aa)) is the C2 PI3K-type domain. One can recognise a PIK helical domain in the interval 517–694 (LARDNELREN…GLLLESYCRA (178 aa)). The 287-residue stretch at 765–1051 (RLEECRIMSS…QMNDAHHGGW (287 aa)) folds into the PI3K/PI4K catalytic domain. The tract at residues 771–777 (IMSSAKR) is G-loop. A catalytic loop region spans residues 912–920 (GIGDRHNSN). The activation loop stretch occupies residues 931 to 957 (HIDFGHFLDHKKKKFGYKRERVPFVLT).

This sequence belongs to the PI3/PI4-kinase family. Heterodimer of a catalytic subunit PIK3CA and a p85 regulatory subunit (PIK3R1, PIK3R2 or PIK3R3). Interacts with IRS1 in nuclear extracts. Interacts with RUFY3. Interacts with RASD2. Interacts with APPL1. Interacts with HRAS and KRAS. Interaction with HRAS/KRAS is required for PI3K pathway signaling and cell proliferation stimulated by EGF and FGF2. Interacts with FAM83B; activates the PI3K/AKT signaling cascade.

It catalyses the reaction a 1,2-diacyl-sn-glycero-3-phospho-(1D-myo-inositol-4,5-bisphosphate) + ATP = a 1,2-diacyl-sn-glycero-3-phospho-(1D-myo-inositol-3,4,5-trisphosphate) + ADP + H(+). It carries out the reaction a 1,2-diacyl-sn-glycero-3-phospho-(1D-myo-inositol) + ATP = a 1,2-diacyl-sn-glycero-3-phospho-(1D-myo-inositol-3-phosphate) + ADP + H(+). The enzyme catalyses L-seryl-[protein] + ATP = O-phospho-L-seryl-[protein] + ADP + H(+). The catalysed reaction is 1,2-dioctanoyl-sn-glycero-3-phospho-(1D-myo-inositol-4,5-bisphosphate) + ATP = 1,2-dioctanoyl-sn-glycero-3-phospho-(1D-myo-inositol-3,4,5-trisphosphate) + ADP + H(+). It catalyses the reaction 1-octadecanoyl-2-(5Z,8Z,11Z,14Z)-eicosatetraenoyl-sn-glycero-3-phospho-1D-myo-inositol 4,5-bisphosphate + ATP = 1-octadecanoyl-2-(5Z,8Z,11Z,14Z-eicosatetraenoyl)-sn-glycero-3-phospho-(1D-myo-inositol 3,4,5-triphosphate) + ADP + H(+). It functions in the pathway phospholipid metabolism; phosphatidylinositol phosphate biosynthesis. In terms of biological role, phosphoinositide-3-kinase (PI3K) phosphorylates phosphatidylinositol (PI) and its phosphorylated derivatives at position 3 of the inositol ring to produce 3-phosphoinositides. Uses ATP and PtdIns(4,5)P2 (phosphatidylinositol 4,5-bisphosphate) to generate phosphatidylinositol 3,4,5-trisphosphate (PIP3). PIP3 plays a key role by recruiting PH domain-containing proteins to the membrane, including AKT1 and PDPK1, activating signaling cascades involved in cell growth, survival, proliferation, motility and morphology. Participates in cellular signaling in response to various growth factors. Involved in the activation of AKT1 upon stimulation by receptor tyrosine kinases ligands such as EGF, insulin, IGF1, VEGFA and PDGF. Involved in signaling via insulin-receptor substrate (IRS) proteins. Essential in endothelial cell migration during vascular development through VEGFA signaling, possibly by regulating RhoA activity. Required for lymphatic vasculature development, possibly by binding to RAS and by activation by EGF and FGF2, but not by PDGF. Regulates invadopodia formation through the PDPK1-AKT1 pathway. Participates in cardiomyogenesis in embryonic stem cells through a AKT1 pathway. Participates in vasculogenesis in embryonic stem cells through PDK1 and protein kinase C pathway. In addition to its lipid kinase activity, it displays a serine-protein kinase activity that results in the autophosphorylation of the p85alpha regulatory subunit as well as phosphorylation of other proteins such as 4EBP1, H-Ras, the IL-3 beta c receptor and possibly others. Plays a role in the positive regulation of phagocytosis and pinocytosis. The protein is Phosphatidylinositol 4,5-bisphosphate 3-kinase catalytic subunit alpha isoform (PIK3CA) of Homo sapiens (Human).